The primary structure comprises 196 residues: Peptidyl-tRNA hydrolase (196 aa).

Tyr-19 provides a ligand contact to tRNA. The active-site Proton acceptor is His-24. TRNA-binding residues include Tyr-68, Asn-70, and Asn-116.

It belongs to the PTH family. As to quaternary structure, monomer.

The protein localises to the cytoplasm. It carries out the reaction an N-acyl-L-alpha-aminoacyl-tRNA + H2O = an N-acyl-L-amino acid + a tRNA + H(+). Its function is as follows. Hydrolyzes ribosome-free peptidyl-tRNAs (with 1 or more amino acids incorporated), which drop off the ribosome during protein synthesis, or as a result of ribosome stalling. Functionally, catalyzes the release of premature peptidyl moieties from peptidyl-tRNA molecules trapped in stalled 50S ribosomal subunits, and thus maintains levels of free tRNAs and 50S ribosomes. The polypeptide is Peptidyl-tRNA hydrolase (Aromatoleum aromaticum (strain DSM 19018 / LMG 30748 / EbN1) (Azoarcus sp. (strain EbN1))).